The primary structure comprises 392 residues: Cytochrome b (392 aa).

4 consecutive transmembrane segments (helical) span residues 38 to 58 (FGSL…FLAM), 82 to 104 (WLLR…LHIF), 119 to 139 (VRCL…TGYV), and 185 to 205 (FFSL…LHLA). Heme b-binding residues include His88 and His102. Heme b contacts are provided by His189 and His203. Residue His208 coordinates a ubiquinone. Helical transmembrane passes span 231–251 (FYVK…IWIF), 295–315 (SGGV…PFFK), 327–347 (IHQG…WIGC), and 354–373 (FVTI…AITP).

The protein belongs to the cytochrome b family. The main subunits of complex b-c1 are: cytochrome b, cytochrome c1 and the Rieske protein. It depends on heme b as a cofactor.

Its subcellular location is the mitochondrion inner membrane. Functionally, component of the ubiquinol-cytochrome c reductase complex (complex III or cytochrome b-c1 complex) that is part of the mitochondrial respiratory chain. The b-c1 complex mediates electron transfer from ubiquinol to cytochrome c. Contributes to the generation of a proton gradient across the mitochondrial membrane that is then used for ATP synthesis. This Pisum sativum (Garden pea) protein is Cytochrome b (MT-CYB).